Here is a 101-residue protein sequence, read N- to C-terminus: Ascorbate-specific PTS system EIIB component (101 aa).

Residues 1-100 enclose the PTS EIIB type-2 domain; it reads MTVRILAVCG…VIKEHFPQDV (100 aa). Residue Cys-9 is the Phosphocysteine intermediate of the active site. Cys-9 bears the Phosphocysteine mark.

The protein localises to the cytoplasm. It catalyses the reaction N(pros)-phospho-L-histidyl-[protein] + L-ascorbate(out) = L-ascorbate 6-phosphate(in) + L-histidyl-[protein]. In terms of biological role, the phosphoenolpyruvate-dependent sugar phosphotransferase system (sugar PTS), a major carbohydrate active transport system, catalyzes the phosphorylation of incoming sugar substrates concomitantly with their translocation across the cell membrane. The enzyme II UlaABC PTS system is involved in ascorbate transport. In Escherichia coli O157:H7, this protein is Ascorbate-specific PTS system EIIB component (ulaB).